Here is a 196-residue protein sequence, read N- to C-terminus: Beta-crystallin A4 (196 aa).

An N-acetylthreonine modification is found at T2. Positions 2 to 11 (TLQCTKSAGH) are N-terminal arm. 2 Beta/gamma crystallin 'Greek key' domains span residues 12-51 (WRVV…KVLS) and 52-98 (GAWV…RPVA). Residues 99–104 (CANHRD) are connecting peptide. 2 consecutive Beta/gamma crystallin 'Greek key' domains span residues 105-146 (SRLT…HVQS) and 147-195 (GAWV…RRIQ).

In terms of assembly, homo/heterodimer, or complexes of higher-order. The structure of beta-crystallin oligomers seems to be stabilized through interactions between the N-terminal arms.

Its function is as follows. Crystallins are the dominant structural components of the vertebrate eye lens. The polypeptide is Beta-crystallin A4 (Cryba4) (Rattus norvegicus (Rat)).